The sequence spans 79 residues: uncharacterized protein (79 aa).

The SpoVT-AbrB domain maps to 10 to 60 (EAVLTMDSKGQILLPKELRERAGLKAGDRLVAIAGCDENEEVCCLILVKAE).

This is an uncharacterized protein from Archaeoglobus fulgidus (strain ATCC 49558 / DSM 4304 / JCM 9628 / NBRC 100126 / VC-16).